The following is a 139-amino-acid chain: Putative pre-16S rRNA nuclease (139 aa).

It belongs to the YqgF nuclease family.

It is found in the cytoplasm. Could be a nuclease involved in processing of the 5'-end of pre-16S rRNA. This is Putative pre-16S rRNA nuclease from Streptococcus agalactiae serotype Ia (strain ATCC 27591 / A909 / CDC SS700).